Reading from the N-terminus, the 312-residue chain is Ribosomal protein L11 methyltransferase (312 aa).

4 residues coordinate S-adenosyl-L-methionine: Thr-164, Gly-185, Asp-207, and Asn-249.

This sequence belongs to the methyltransferase superfamily. PrmA family.

Its subcellular location is the cytoplasm. It carries out the reaction L-lysyl-[protein] + 3 S-adenosyl-L-methionine = N(6),N(6),N(6)-trimethyl-L-lysyl-[protein] + 3 S-adenosyl-L-homocysteine + 3 H(+). Functionally, methylates ribosomal protein L11. The protein is Ribosomal protein L11 methyltransferase of Clostridium novyi (strain NT).